Reading from the N-terminus, the 80-residue chain is MKTTILILLILGLGINAKSLEERKSEEEKVFHLLGKIIHHVGNFVYGFSHVFGDDQQDNGKFYGHYAEDNGKHWYDTGDQ.

The N-terminal stretch at 1 to 19 (MKTTILILLILGLGINAKS) is a signal peptide. Residues 20–29 (LEERKSEEEK) constitute a propeptide that is removed on maturation. At F52 the chain carries Phenylalanine amide. Residues 54-80 (DDQQDNGKFYGHYAEDNGKHWYDTGDQ) constitute a propeptide that is removed on maturation.

In terms of tissue distribution, hemocytes and pharyngeal tissues.

Its subcellular location is the secreted. In terms of biological role, has antimicrobial activity against E.coli, L.monocytogenes and C.albicans. This is Clavanin-C from Styela clava (Sea squirt).